Here is a 340-residue protein sequence, read N- to C-terminus: Phenylalanine--tRNA ligase alpha subunit (340 aa).

Glu-255 lines the Mg(2+) pocket.

It belongs to the class-II aminoacyl-tRNA synthetase family. Phe-tRNA synthetase alpha subunit type 1 subfamily. Tetramer of two alpha and two beta subunits. It depends on Mg(2+) as a cofactor.

It is found in the cytoplasm. The enzyme catalyses tRNA(Phe) + L-phenylalanine + ATP = L-phenylalanyl-tRNA(Phe) + AMP + diphosphate + H(+). This Heliobacterium modesticaldum (strain ATCC 51547 / Ice1) protein is Phenylalanine--tRNA ligase alpha subunit.